Reading from the N-terminus, the 445-residue chain is Methylenetetrahydrofolate--tRNA-(uracil-5-)-methyltransferase TrmFO (445 aa).

10–15 contributes to the FAD binding site; it reads GGGLSG.

Belongs to the MnmG family. TrmFO subfamily. FAD serves as cofactor.

The protein resides in the cytoplasm. The catalysed reaction is uridine(54) in tRNA + (6R)-5,10-methylene-5,6,7,8-tetrahydrofolate + NADH + H(+) = 5-methyluridine(54) in tRNA + (6S)-5,6,7,8-tetrahydrofolate + NAD(+). It catalyses the reaction uridine(54) in tRNA + (6R)-5,10-methylene-5,6,7,8-tetrahydrofolate + NADPH + H(+) = 5-methyluridine(54) in tRNA + (6S)-5,6,7,8-tetrahydrofolate + NADP(+). Its function is as follows. Catalyzes the folate-dependent formation of 5-methyl-uridine at position 54 (M-5-U54) in all tRNAs. This chain is Methylenetetrahydrofolate--tRNA-(uracil-5-)-methyltransferase TrmFO, found in Lawsonia intracellularis (strain PHE/MN1-00).